We begin with the raw amino-acid sequence, 420 residues long: Serine hydroxymethyltransferase (420 aa).

Residues L121 and 125-127 (GHL) each bind (6S)-5,6,7,8-tetrahydrofolate. An N6-(pyridoxal phosphate)lysine modification is found at K229.

It belongs to the SHMT family. As to quaternary structure, homodimer. The cofactor is pyridoxal 5'-phosphate.

Its subcellular location is the cytoplasm. The catalysed reaction is (6R)-5,10-methylene-5,6,7,8-tetrahydrofolate + glycine + H2O = (6S)-5,6,7,8-tetrahydrofolate + L-serine. The protein operates within one-carbon metabolism; tetrahydrofolate interconversion. It functions in the pathway amino-acid biosynthesis; glycine biosynthesis; glycine from L-serine: step 1/1. Catalyzes the reversible interconversion of serine and glycine with tetrahydrofolate (THF) serving as the one-carbon carrier. This reaction serves as the major source of one-carbon groups required for the biosynthesis of purines, thymidylate, methionine, and other important biomolecules. Also exhibits THF-independent aldolase activity toward beta-hydroxyamino acids, producing glycine and aldehydes, via a retro-aldol mechanism. In Pasteurella multocida (strain Pm70), this protein is Serine hydroxymethyltransferase.